The primary structure comprises 48 residues: MPVPKKRTSISKKKIRKNFWKKKGYKAALKAFSLADSILTGTSKVIVL.

Belongs to the bacterial ribosomal protein bL32 family.

It localises to the plastid. The protein localises to the chloroplast. The polypeptide is Large ribosomal subunit protein bL32c (rpl32) (Vicia faba (Broad bean)).